A 503-amino-acid chain; its full sequence is Aromatase (503 aa).

2 helical membrane passes run 19–39 (EVVP…LLVW) and 53–73 (FLGI…IGSA). Substrate contacts are provided by Asp-309 and Met-374. Cys-437 serves as a coordination point for heme.

Belongs to the cytochrome P450 family. Requires heme as cofactor.

Its subcellular location is the endoplasmic reticulum membrane. The protein localises to the microsome membrane. It catalyses the reaction testosterone + 3 reduced [NADPH--hemoprotein reductase] + 3 O2 = 17beta-estradiol + formate + 3 oxidized [NADPH--hemoprotein reductase] + 4 H2O + 4 H(+). The enzyme catalyses androst-4-ene-3,17-dione + 3 reduced [NADPH--hemoprotein reductase] + 3 O2 = estrone + formate + 3 oxidized [NADPH--hemoprotein reductase] + 4 H2O + 4 H(+). The catalysed reaction is androst-4-ene-3,17-dione + reduced [NADPH--hemoprotein reductase] + O2 = 19-hydroxyandrost-4-ene-3,17-dione + oxidized [NADPH--hemoprotein reductase] + H2O + H(+). It carries out the reaction 19-hydroxyandrost-4-ene-3,17-dione + reduced [NADPH--hemoprotein reductase] + O2 = 19-oxo-androst-4-ene-3,17-dione + oxidized [NADPH--hemoprotein reductase] + 2 H2O + H(+). It catalyses the reaction 19-oxo-androst-4-ene-3,17-dione + reduced [NADPH--hemoprotein reductase] + O2 = estrone + formate + oxidized [NADPH--hemoprotein reductase] + H2O + 2 H(+). The enzyme catalyses estrone + reduced [NADPH--hemoprotein reductase] + O2 = 2-hydroxyestrone + oxidized [NADPH--hemoprotein reductase] + H2O + H(+). The catalysed reaction is 17beta-hydroxy-5alpha-androstan-3-one + reduced [NADPH--hemoprotein reductase] + O2 = 17beta,19-dihydroxy-3-oxo-5alpha-androstanone + oxidized [NADPH--hemoprotein reductase] + H2O + H(+). It carries out the reaction 17beta,19-dihydroxy-3-oxo-5alpha-androstanone + reduced [NADPH--hemoprotein reductase] + O2 = 17beta-hydroxy-3,19-dioxo-5alpha-androstanone + oxidized [NADPH--hemoprotein reductase] + 2 H2O + H(+). It catalyses the reaction 17beta-hydroxy-3,19-dioxo-5alpha-androstanone + reduced [NADPH--hemoprotein reductase] + O2 = 17beta-hydroxy-3-oxo-19-nor-5alpha-androst-1-ene + formate + oxidized [NADPH--hemoprotein reductase] + H2O + 2 H(+). The protein operates within steroid hormone biosynthesis. Functionally, a cytochrome P450 monooxygenase that catalyzes the conversion of C19 androgens, androst-4-ene-3,17-dione (androstenedione) and testosterone to the C18 estrogens, estrone and estradiol, respectively. Catalyzes three successive oxidations of C19 androgens: two conventional oxidations at C19 yielding 19-hydroxy and 19-oxo/19-aldehyde derivatives, followed by a third oxidative aromatization step that involves C1-beta hydrogen abstraction combined with cleavage of the C10-C19 bond to yield a phenolic A ring and formic acid. Alternatively, the third oxidative reaction yields a 19-norsteroid and formic acid. Converts dihydrotestosterone to delta1,10-dehydro 19-nordihydrotestosterone and may play a role in homeostasis of this potent androgen. Also displays 2-hydroxylase activity toward estrone. Mechanistically, uses molecular oxygen inserting one oxygen atom into a substrate, and reducing the second into a water molecule, with two electrons provided by NADPH via cytochrome P450 reductase (CPR; NADPH-ferrihemoprotein reductase). This is Aromatase (CYP19A1) from Bos taurus (Bovine).